Reading from the N-terminus, the 428-residue chain is Elongation factor 1-alpha (428 aa).

In terms of domain architecture, tr-type G spans 5-217 (KPHVNIVFIG…DQIPEPEKPV (213 aa)). Residues 14–21 (GHVDHGKS) are G1. 14-21 (GHVDHGKS) serves as a coordination point for GTP. Ser21 contributes to the Mg(2+) binding site. The G2 stretch occupies residues 68 to 72 (GITID). The G3 stretch occupies residues 89-92 (DAPG). Residues 89 to 93 (DAPGH) and 144 to 147 (NKMD) contribute to the GTP site. A G4 region spans residues 144-147 (NKMD). Residues 181-183 (SAW) are G5.

The protein belongs to the TRAFAC class translation factor GTPase superfamily. Classic translation factor GTPase family. EF-Tu/EF-1A subfamily.

It is found in the cytoplasm. The catalysed reaction is GTP + H2O = GDP + phosphate + H(+). Functionally, GTP hydrolase that promotes the GTP-dependent binding of aminoacyl-tRNA to the A-site of ribosomes during protein biosynthesis. This chain is Elongation factor 1-alpha, found in Pyrococcus abyssi (strain GE5 / Orsay).